A 220-amino-acid chain; its full sequence is NADH-quinone oxidoreductase subunit I (220 aa).

2 consecutive 4Fe-4S ferredoxin-type domains span residues 71-102 (LQRLLDSGSERCIGCGLCEKICTSNCIRIITH) and 112-141 (DSYTINLGRCIYCGLCAEVCPELAIVMGNR). [4Fe-4S] cluster is bound by residues Cys82, Cys85, Cys88, Cys92, Cys121, Cys124, Cys127, and Cys131. The disordered stretch occupies residues 187-220 (MQATPLDYVQEPSKEESKEETPTRSESHKGDENV). Over residues 198 to 220 (PSKEESKEETPTRSESHKGDENV) the composition is skewed to basic and acidic residues.

This sequence belongs to the complex I 23 kDa subunit family. In terms of assembly, NDH-1 is composed of 14 different subunits. Subunits NuoA, H, J, K, L, M, N constitute the membrane sector of the complex. [4Fe-4S] cluster is required as a cofactor.

It localises to the cell inner membrane. The enzyme catalyses a quinone + NADH + 5 H(+)(in) = a quinol + NAD(+) + 4 H(+)(out). NDH-1 shuttles electrons from NADH, via FMN and iron-sulfur (Fe-S) centers, to quinones in the respiratory chain. The immediate electron acceptor for the enzyme in this species is believed to be ubiquinone. Couples the redox reaction to proton translocation (for every two electrons transferred, four hydrogen ions are translocated across the cytoplasmic membrane), and thus conserves the redox energy in a proton gradient. The chain is NADH-quinone oxidoreductase subunit I from Helicobacter pylori (strain G27).